We begin with the raw amino-acid sequence, 129 residues long: Glycine cleavage system H protein (129 aa).

The Lipoyl-binding domain occupies 24–106; it reads LIRVGISAFA…HGAGWLLVVR (83 aa). Position 65 is an N6-lipoyllysine (Lys-65).

Belongs to the GcvH family. In terms of assembly, the glycine cleavage system is composed of four proteins: P, T, L and H. The cofactor is (R)-lipoate.

Its function is as follows. The glycine cleavage system catalyzes the degradation of glycine. The H protein shuttles the methylamine group of glycine from the P protein to the T protein. The sequence is that of Glycine cleavage system H protein from Synechococcus sp. (strain CC9902).